Here is a 267-residue protein sequence, read N- to C-terminus: Glucosamine-6-phosphate deaminase (267 aa).

Asp72 serves as the catalytic Proton acceptor; for enolization step. The active-site For ring-opening step is the Asp141. Catalysis depends on His143, which acts as the Proton acceptor; for ring-opening step. Residue Glu148 is the For ring-opening step of the active site.

This sequence belongs to the glucosamine/galactosamine-6-phosphate isomerase family. NagB subfamily. In terms of assembly, homohexamer.

It catalyses the reaction alpha-D-glucosamine 6-phosphate + H2O = beta-D-fructose 6-phosphate + NH4(+). It participates in amino-sugar metabolism; N-acetylneuraminate degradation; D-fructose 6-phosphate from N-acetylneuraminate: step 5/5. With respect to regulation, allosterically activated by N-acetylglucosamine 6-phosphate (GlcNAc6P). Its function is as follows. Catalyzes the reversible isomerization-deamination of glucosamine 6-phosphate (GlcN6P) to form fructose 6-phosphate (Fru6P) and ammonium ion. The protein is Glucosamine-6-phosphate deaminase of Haemophilus ducreyi (strain 35000HP / ATCC 700724).